A 364-amino-acid polypeptide reads, in one-letter code: Aminomethyltransferase (364 aa).

The protein belongs to the GcvT family. In terms of assembly, the glycine cleavage system is composed of four proteins: P, T, L and H.

The catalysed reaction is N(6)-[(R)-S(8)-aminomethyldihydrolipoyl]-L-lysyl-[protein] + (6S)-5,6,7,8-tetrahydrofolate = N(6)-[(R)-dihydrolipoyl]-L-lysyl-[protein] + (6R)-5,10-methylene-5,6,7,8-tetrahydrofolate + NH4(+). The glycine cleavage system catalyzes the degradation of glycine. This chain is Aminomethyltransferase, found in Salmonella arizonae (strain ATCC BAA-731 / CDC346-86 / RSK2980).